A 284-amino-acid chain; its full sequence is Bifunctional protein FolD 2 (284 aa).

NADP(+)-binding positions include 166-168 and isoleucine 232; that span reads GAS.

It belongs to the tetrahydrofolate dehydrogenase/cyclohydrolase family. In terms of assembly, homodimer.

It carries out the reaction (6R)-5,10-methylene-5,6,7,8-tetrahydrofolate + NADP(+) = (6R)-5,10-methenyltetrahydrofolate + NADPH. The enzyme catalyses (6R)-5,10-methenyltetrahydrofolate + H2O = (6R)-10-formyltetrahydrofolate + H(+). The protein operates within one-carbon metabolism; tetrahydrofolate interconversion. Catalyzes the oxidation of 5,10-methylenetetrahydrofolate to 5,10-methenyltetrahydrofolate and then the hydrolysis of 5,10-methenyltetrahydrofolate to 10-formyltetrahydrofolate. The protein is Bifunctional protein FolD 2 of Pseudomonas putida (strain ATCC 47054 / DSM 6125 / CFBP 8728 / NCIMB 11950 / KT2440).